We begin with the raw amino-acid sequence, 749 residues long: Soluble starch synthase 2-1, chloroplastic/amyloplastic (749 aa).

The N-terminal 44 residues, 1 to 44, are a transit peptide targeting the chloroplast; that stretch reads MAAAAVSSLLAPSGSCYSPGCHSCWGPGPGGGRRLPSPRRRPIT. K272 lines the ADP-alpha-D-glucose pocket.

It belongs to the glycosyltransferase 1 family. Bacterial/plant glycogen synthase subfamily. Expressed in endosperm, leaves, and weakly in roots.

It localises to the plastid. Its subcellular location is the amyloplast. The protein resides in the chloroplast. The catalysed reaction is [(1-&gt;4)-alpha-D-glucosyl](n) + ADP-alpha-D-glucose = [(1-&gt;4)-alpha-D-glucosyl](n+1) + ADP + H(+). It functions in the pathway glycan biosynthesis; starch biosynthesis. Functionally, may be involved in starch synthesis in endosperm amyloplasts and contribute to the deposition of transient starch in chloroplasts of leaves. The chain is Soluble starch synthase 2-1, chloroplastic/amyloplastic (SSII-1) from Oryza sativa subsp. japonica (Rice).